Reading from the N-terminus, the 231-residue chain is Large ribosomal subunit protein uL1 (231 aa).

Belongs to the universal ribosomal protein uL1 family. As to quaternary structure, part of the 50S ribosomal subunit.

Its function is as follows. Binds directly to 23S rRNA. The L1 stalk is quite mobile in the ribosome, and is involved in E site tRNA release. Functionally, protein L1 is also a translational repressor protein, it controls the translation of the L11 operon by binding to its mRNA. This is Large ribosomal subunit protein uL1 from Neisseria meningitidis serogroup A / serotype 4A (strain DSM 15465 / Z2491).